A 105-amino-acid polypeptide reads, in one-letter code: UPF0145 protein VP1283 (105 aa).

It belongs to the UPF0145 family.

The chain is UPF0145 protein VP1283 from Vibrio parahaemolyticus serotype O3:K6 (strain RIMD 2210633).